Here is a 187-residue protein sequence, read N- to C-terminus: MNLQHHFLIAMPALQDPIFRRSVVYICEYNDEGAMGIIINKPLENLQVEGILEKLKIVPEPRNPEIRLDKPVMLGGPLAEDRGFILHTPPSDFSSSIRISDNTVVTTSRDVLETLGTDRQPGNVLVALGYSSWEKGQLEQEILDNAWLTAPADQNILFRTPIADRWREAAKLIGIDIVTMPGVAGHA.

The protein belongs to the UPF0301 (AlgH) family.

The chain is UPF0301 protein KPK_0728 from Klebsiella pneumoniae (strain 342).